We begin with the raw amino-acid sequence, 413 residues long: Serine hydroxymethyltransferase (413 aa).

Residues Leu-117 and 121-123 (GHL) each bind (6S)-5,6,7,8-tetrahydrofolate. Lys-226 carries the post-translational modification N6-(pyridoxal phosphate)lysine. Residue 349-351 (SPF) coordinates (6S)-5,6,7,8-tetrahydrofolate.

It belongs to the SHMT family. In terms of assembly, homodimer. It depends on pyridoxal 5'-phosphate as a cofactor.

It is found in the cytoplasm. It carries out the reaction (6R)-5,10-methylene-5,6,7,8-tetrahydrofolate + glycine + H2O = (6S)-5,6,7,8-tetrahydrofolate + L-serine. It participates in one-carbon metabolism; tetrahydrofolate interconversion. Its pathway is amino-acid biosynthesis; glycine biosynthesis; glycine from L-serine: step 1/1. Functionally, catalyzes the reversible interconversion of serine and glycine with tetrahydrofolate (THF) serving as the one-carbon carrier. This reaction serves as the major source of one-carbon groups required for the biosynthesis of purines, thymidylate, methionine, and other important biomolecules. Also exhibits THF-independent aldolase activity toward beta-hydroxyamino acids, producing glycine and aldehydes, via a retro-aldol mechanism. The protein is Serine hydroxymethyltransferase of Listeria monocytogenes serovar 1/2a (strain ATCC BAA-679 / EGD-e).